A 217-amino-acid chain; its full sequence is tRNA (guanine-N(7)-)-methyltransferase (217 aa).

Glutamate 44, glutamate 69, aspartate 96, and aspartate 118 together coordinate S-adenosyl-L-methionine. Aspartate 118 is an active-site residue. Residues lysine 122, aspartate 154, and 191–194 contribute to the substrate site; that span reads TEYE.

The protein belongs to the class I-like SAM-binding methyltransferase superfamily. TrmB family.

It catalyses the reaction guanosine(46) in tRNA + S-adenosyl-L-methionine = N(7)-methylguanosine(46) in tRNA + S-adenosyl-L-homocysteine. The protein operates within tRNA modification; N(7)-methylguanine-tRNA biosynthesis. Catalyzes the formation of N(7)-methylguanine at position 46 (m7G46) in tRNA. This chain is tRNA (guanine-N(7)-)-methyltransferase, found in Bacillus mycoides (strain KBAB4) (Bacillus weihenstephanensis).